Reading from the N-terminus, the 372-residue chain is Phospho-N-acetylmuramoyl-pentapeptide-transferase (372 aa).

Helical transmembrane passes span 2–22 (LVWLFSWLGHYYAPFYAVSSL), 71–91 (TPTMGGVLILSAIGVSTLLWA), 98–118 (VWILLIVMIIFGAVGWADDWL), 134–154 (YFWLSMGALFVGISLYYIATL), 176–196 (MIPFSAVPFGIGFIIFTYFVI), 211–231 (GLAILPVVLVAAGLGAMAYVS), 251–271 (VIIVCGAMIGAGLGFLWFNAH), 275–295 (VFMGDVGALSLGAMLGTIAVM), 300–320 (IAFAIMGGLFVAEALSVMLQV), and 349–369 (QVVARFWIIAIILVILGLMTL).

This sequence belongs to the glycosyltransferase 4 family. MraY subfamily. Mg(2+) serves as cofactor.

It localises to the cell inner membrane. It catalyses the reaction UDP-N-acetyl-alpha-D-muramoyl-L-alanyl-gamma-D-glutamyl-meso-2,6-diaminopimeloyl-D-alanyl-D-alanine + di-trans,octa-cis-undecaprenyl phosphate = di-trans,octa-cis-undecaprenyl diphospho-N-acetyl-alpha-D-muramoyl-L-alanyl-D-glutamyl-meso-2,6-diaminopimeloyl-D-alanyl-D-alanine + UMP. The protein operates within cell wall biogenesis; peptidoglycan biosynthesis. In terms of biological role, catalyzes the initial step of the lipid cycle reactions in the biosynthesis of the cell wall peptidoglycan: transfers peptidoglycan precursor phospho-MurNAc-pentapeptide from UDP-MurNAc-pentapeptide onto the lipid carrier undecaprenyl phosphate, yielding undecaprenyl-pyrophosphoryl-MurNAc-pentapeptide, known as lipid I. The polypeptide is Phospho-N-acetylmuramoyl-pentapeptide-transferase (Psychrobacter cryohalolentis (strain ATCC BAA-1226 / DSM 17306 / VKM B-2378 / K5)).